The following is a 213-amino-acid chain: Large ribosomal subunit protein bL25 (213 aa).

Belongs to the bacterial ribosomal protein bL25 family. CTC subfamily. In terms of assembly, part of the 50S ribosomal subunit; part of the 5S rRNA/L5/L18/L25 subcomplex. Contacts the 5S rRNA. Binds to the 5S rRNA independently of L5 and L18.

Functionally, this is one of the proteins that binds to the 5S RNA in the ribosome where it forms part of the central protuberance. This is Large ribosomal subunit protein bL25 from Mesorhizobium japonicum (strain LMG 29417 / CECT 9101 / MAFF 303099) (Mesorhizobium loti (strain MAFF 303099)).